A 378-amino-acid polypeptide reads, in one-letter code: Biotin synthase, mitochondrial (378 aa).

Residues 1–26 (MMLVRSVFRSQLRPSVSGGLQSASCY) constitute a mitochondrion transit peptide. One can recognise a Radical SAM core domain in the interval 79–308 (REVQQCTLLS…KAMVRLSAGR (230 aa)). C94, C98, and C101 together coordinate [4Fe-4S] cluster. Residues C138, C171, C231, and R303 each contribute to the [2Fe-2S] cluster site. Residues 357-378 (PPSFSEDDSESENCEKVASASH) are disordered.

It belongs to the radical SAM superfamily. Biotin synthase family. [4Fe-4S] cluster is required as a cofactor. [2Fe-2S] cluster serves as cofactor.

The protein resides in the mitochondrion. It carries out the reaction (4R,5S)-dethiobiotin + (sulfur carrier)-SH + 2 reduced [2Fe-2S]-[ferredoxin] + 2 S-adenosyl-L-methionine = (sulfur carrier)-H + biotin + 2 5'-deoxyadenosine + 2 L-methionine + 2 oxidized [2Fe-2S]-[ferredoxin]. Its pathway is cofactor biosynthesis; biotin biosynthesis; biotin from 7,8-diaminononanoate: step 2/2. The chain is Biotin synthase, mitochondrial (BIO2) from Arabidopsis thaliana (Mouse-ear cress).